The primary structure comprises 81 residues: Sulfur carrier protein TusA (81 aa).

Cys19 serves as the catalytic Cysteine persulfide intermediate.

The protein belongs to the sulfur carrier protein TusA family. Interacts with IscS.

It is found in the cytoplasm. It participates in tRNA modification. Sulfur carrier protein involved in sulfur trafficking in the cell. Part of a sulfur-relay system required for 2-thiolation during synthesis of 2-thiouridine of the modified wobble base 5-methylaminomethyl-2-thiouridine (mnm(5)s(2)U) in tRNA. Interacts with IscS and stimulates its cysteine desulfurase activity. Accepts an activated sulfur from IscS, which is then transferred to TusD, and thus determines the direction of sulfur flow from IscS to 2-thiouridine formation. Also appears to be involved in sulfur transfer for the biosynthesis of molybdopterin. This Klebsiella pneumoniae subsp. pneumoniae (strain ATCC 700721 / MGH 78578) protein is Sulfur carrier protein TusA.